The following is a 247-amino-acid chain: 5-oxoprolinase subunit A (247 aa).

Belongs to the LamB/PxpA family. Forms a complex composed of PxpA, PxpB and PxpC.

The catalysed reaction is 5-oxo-L-proline + ATP + 2 H2O = L-glutamate + ADP + phosphate + H(+). In terms of biological role, catalyzes the cleavage of 5-oxoproline to form L-glutamate coupled to the hydrolysis of ATP to ADP and inorganic phosphate. The sequence is that of 5-oxoprolinase subunit A from Vibrio vulnificus (strain CMCP6).